Here is a 190-residue protein sequence, read N- to C-terminus: MQKEPSLIFLTGFSGSGKSTIGPLLANSLGYEFVDLDALIERECGKSINQIFAEAGEAAFRQHEEQTLETLLMRRKTVVSLGGGVLEQPRAFELVRQAGTVVYLKSPVKTLARRLSNKTDRPLLKGEQGEKLSQEEIEQKIAELLARREPRYECADITVETDAKRIGSTVEELTRKIERYMRTLALSSEE.

Residue 15–20 participates in ATP binding; that stretch reads GSGKST. Serine 19 contributes to the Mg(2+) binding site. Residues aspartate 37, arginine 61, and glycine 83 each contribute to the substrate site. Arginine 121 contributes to the ATP binding site. Substrate is bound at residue arginine 148.

Belongs to the shikimate kinase family. In terms of assembly, monomer. Requires Mg(2+) as cofactor.

The protein resides in the cytoplasm. It carries out the reaction shikimate + ATP = 3-phosphoshikimate + ADP + H(+). It functions in the pathway metabolic intermediate biosynthesis; chorismate biosynthesis; chorismate from D-erythrose 4-phosphate and phosphoenolpyruvate: step 5/7. Its function is as follows. Catalyzes the specific phosphorylation of the 3-hydroxyl group of shikimic acid using ATP as a cosubstrate. The chain is Shikimate kinase from Chlorobium chlorochromatii (strain CaD3).